The following is a 233-amino-acid chain: Small ribosomal subunit protein uS2 (233 aa).

Belongs to the universal ribosomal protein uS2 family.

The sequence is that of Small ribosomal subunit protein uS2 from Bacillus mycoides (strain KBAB4) (Bacillus weihenstephanensis).